The primary structure comprises 316 residues: 4-diphosphocytidyl-2-C-methyl-D-erythritol kinase (316 aa).

Lys32 is an active-site residue. Residue 126–136 participates in ATP binding; the sequence is PVGAGLGGGSA. Asp168 is a catalytic residue.

This sequence belongs to the GHMP kinase family. IspE subfamily.

The catalysed reaction is 4-CDP-2-C-methyl-D-erythritol + ATP = 4-CDP-2-C-methyl-D-erythritol 2-phosphate + ADP + H(+). The protein operates within isoprenoid biosynthesis; isopentenyl diphosphate biosynthesis via DXP pathway; isopentenyl diphosphate from 1-deoxy-D-xylulose 5-phosphate: step 3/6. Its function is as follows. Catalyzes the phosphorylation of the position 2 hydroxy group of 4-diphosphocytidyl-2C-methyl-D-erythritol. The sequence is that of 4-diphosphocytidyl-2-C-methyl-D-erythritol kinase from Bifidobacterium longum subsp. infantis (strain ATCC 15697 / DSM 20088 / JCM 1222 / NCTC 11817 / S12).